We begin with the raw amino-acid sequence, 234 residues long: Carboxymethylenebutenolidase 1 (234 aa).

Catalysis depends on residues Cys123, Asp171, and His201.

This sequence belongs to the dienelactone hydrolase family. In terms of assembly, monomer.

The catalysed reaction is 2-(5-oxo-2,5-dihydrofuran-2-ylidene)acetate + H2O = 4-oxohex-2-enedioate + H(+). It participates in aromatic compound metabolism; 3-chlorocatechol degradation. Ring cleavage of cyclic ester dienelactone to produce maleylacetate. In Cupriavidus pinatubonensis (strain JMP 134 / LMG 1197) (Cupriavidus necator (strain JMP 134)), this protein is Carboxymethylenebutenolidase 1 (tfdEI).